A 242-amino-acid polypeptide reads, in one-letter code: Small ribosomal subunit protein uS2 (242 aa).

This sequence belongs to the universal ribosomal protein uS2 family.

The chain is Small ribosomal subunit protein uS2 from Shewanella loihica (strain ATCC BAA-1088 / PV-4).